Here is a 298-residue protein sequence, read N- to C-terminus: Acetyl-coenzyme A carboxylase carboxyl transferase subunit beta 1 (298 aa).

A CoA carboxyltransferase N-terminal domain is found at 26-294 (MWVKCPSCGD…RAADVQNAPA (269 aa)). Zn(2+) is bound by residues cysteine 30, cysteine 33, cysteine 49, and cysteine 51. The C4-type zinc finger occupies 30–51 (CPSCGDLIYTRQFSDNLKVCKC).

Belongs to the AccD/PCCB family. Acetyl-CoA carboxylase is a heterohexamer composed of biotin carboxyl carrier protein (AccB), biotin carboxylase (AccC) and two subunits each of ACCase subunit alpha (AccA) and ACCase subunit beta (AccD). Zn(2+) is required as a cofactor.

It localises to the cytoplasm. The catalysed reaction is N(6)-carboxybiotinyl-L-lysyl-[protein] + acetyl-CoA = N(6)-biotinyl-L-lysyl-[protein] + malonyl-CoA. Its pathway is lipid metabolism; malonyl-CoA biosynthesis; malonyl-CoA from acetyl-CoA: step 1/1. Its function is as follows. Component of the acetyl coenzyme A carboxylase (ACC) complex. Biotin carboxylase (BC) catalyzes the carboxylation of biotin on its carrier protein (BCCP) and then the CO(2) group is transferred by the transcarboxylase to acetyl-CoA to form malonyl-CoA. The sequence is that of Acetyl-coenzyme A carboxylase carboxyl transferase subunit beta 1 from Roseiflexus castenholzii (strain DSM 13941 / HLO8).